The primary structure comprises 98 residues: MAIESINAASVLPKVTLGETAKTDNATGAGNTFTQMLDSMSDTQSNAQTSVSNLLTTGEGNASDVLIQMKKAESEMKTAAVIRDNVIESYKQLLNMQV.

The disordered stretch occupies residues 22-56 (KTDNATGAGNTFTQMLDSMSDTQSNAQTSVSNLLT). Residues 23 to 56 (TDNATGAGNTFTQMLDSMSDTQSNAQTSVSNLLT) are compositionally biased toward polar residues.

The protein belongs to the FliE family.

It localises to the bacterial flagellum basal body. In Listeria innocua serovar 6a (strain ATCC BAA-680 / CLIP 11262), this protein is Flagellar hook-basal body complex protein FliE.